Reading from the N-terminus, the 447-residue chain is uncharacterized protein (447 aa).

Positions 392 to 435 (RFTKPSSSVAKSTSPSLRNSGSDESDLNQSDSDKEDERVVPVPK) are disordered. The span at 395–407 (KPSSSVAKSTSPS) shows a compositional bias: low complexity. Polar residues predominate over residues 408 to 421 (LRNSGSDESDLNQS).

This is an uncharacterized protein from Invertebrate iridescent virus 3 (IIV-3).